The primary structure comprises 362 residues: Somatostatin receptor type 5 (362 aa).

Over residues 1 to 10 the composition is skewed to polar residues; the sequence is MEPLSLTSTP. The interval 1 to 24 is disordered; sequence MEPLSLTSTPSWNASAASSSSHNW. The Extracellular segment spans residues 1 to 35; sequence MEPLSLTSTPSWNASAASSSSHNWSLVDPVSPMGA. Over residues 11 to 24 the composition is skewed to low complexity; sequence SWNASAASSSSHNW. Residues asparagine 13 and asparagine 23 are each glycosylated (N-linked (GlcNAc...) asparagine). A helical transmembrane segment spans residues 36 to 63; the sequence is RAVLVPVLYLLVCTVGLGGNTLVIYVVL. The Cytoplasmic segment spans residues 64 to 73; sequence RYAKMKTVTN. Residues 74-99 traverse the membrane as a helical segment; the sequence is VYILNLAVADVLFMLGLPFLATQNAV. The Extracellular segment spans residues 100-110; it reads SYWPFGSFLCR. Cysteine 109 and cysteine 184 are disulfide-bonded. A helical membrane pass occupies residues 111 to 132; the sequence is LVMTLDGINQFTSIFCLMVMSV. The Cytoplasmic portion of the chain corresponds to 133–154; it reads DRYLAVVHPLRSARWRRPRVAK. A helical membrane pass occupies residues 155–175; it reads LASAAVWVFSLLMSLPLLVFA. Topologically, residues 176-195 are extracellular; it reads DVQEGWGTCNLSWPEPVGLW. N-linked (GlcNAc...) asparagine glycosylation is present at asparagine 185. A helical membrane pass occupies residues 196 to 220; that stretch reads GAAFITYTSVLGFFGPLLVICLCYL. The Cytoplasmic segment spans residues 221-246; the sequence is LIVVKVKAAGMRVGSSRRRRSERKVT. Residues 247 to 272 traverse the membrane as a helical segment; it reads RMVVVVVLVFVGCWLPFFIVNIVNLA. Over 273–282 the chain is Extracellular; the sequence is FTLPEEPTSA. A helical transmembrane segment spans residues 283–307; sequence GLYFFVVVLSYANSCANPLLYGFLS. At 308–362 the chain is on the cytoplasmic side; sequence DNFRQSFRKALCLRRGYGVEDADAIEPRPDKSGRPQTTLPTRSCEANGLMQTSRL. A lipid anchor (S-palmitoyl cysteine; by ZDHHC5) is attached at cysteine 319. Residues 330 to 362 are disordered; sequence DAIEPRPDKSGRPQTTLPTRSCEANGLMQTSRL.

Belongs to the G-protein coupled receptor 1 family. Heterodimer with SSTR2. Heterodimerization with SSTR2 increases cell growth inhibition activity of SSTR2. Post-translationally, palmitoylated at Cys-319 by ZDHHC5, but not ZDHHC8. Palmitoylation creates an additional intracellular loop which is thought to be important for efficient coupling to G-proteins and may target the protein to lipid rafts. Expressed in adult brain but not in liver, heart, spleen, or kidney.

It is found in the cell membrane. In terms of biological role, receptor for somatostatin-28. The activity of this receptor is mediated by G proteins which inhibit adenylyl cyclase. Increases cell growth inhibition activity of SSTR2 following heterodimerization. In Mus musculus (Mouse), this protein is Somatostatin receptor type 5 (Sstr5).